The chain runs to 71 residues: Large ribosomal subunit protein bL31 (71 aa).

Residues Cys16, Cys18, Cys37, and Cys40 each contribute to the Zn(2+) site.

This sequence belongs to the bacterial ribosomal protein bL31 family. Type A subfamily. In terms of assembly, part of the 50S ribosomal subunit. The cofactor is Zn(2+).

Binds the 23S rRNA. The polypeptide is Large ribosomal subunit protein bL31 (Nitratidesulfovibrio vulgaris (strain ATCC 29579 / DSM 644 / CCUG 34227 / NCIMB 8303 / VKM B-1760 / Hildenborough) (Desulfovibrio vulgaris)).